Consider the following 393-residue polypeptide: Diphosphomevalonate decarboxylase (393 aa).

Residues 21-24 (YWGK), R77, 156-161 (SGSACR), and T212 contribute to the (R)-5-diphosphomevalonate site.

The protein belongs to the diphosphomevalonate decarboxylase family. In terms of assembly, homodimer.

It localises to the cytoplasm. It is found in the nucleus. It catalyses the reaction (R)-5-diphosphomevalonate + ATP = isopentenyl diphosphate + ADP + phosphate + CO2. Its pathway is isoprenoid biosynthesis; isopentenyl diphosphate biosynthesis via mevalonate pathway; isopentenyl diphosphate from (R)-mevalonate: step 3/3. In terms of biological role, diphosphomevalonate decarboxylase; part of the second module of ergosterol biosynthesis pathway that includes the middle steps of the pathway. Mvd1 converts diphosphomevalonate into isopentenyl diphosphate. The second module is carried out in the vacuole and involves the formation of farnesyl diphosphate, which is also an important intermediate in the biosynthesis of ubiquinone, dolichol, heme and prenylated proteins. Activity by the mevalonate kinase erg12 first converts mevalonate into 5-phosphomevalonate. 5-phosphomevalonate is then further converted to 5-diphosphomevalonate by the phosphomevalonate kinase erg8. The diphosphomevalonate decarboxylase mvd1 then produces isopentenyl diphosphate. The isopentenyl-diphosphate delta-isomerase idi1 then catalyzes the 1,3-allylic rearrangement of the homoallylic substrate isopentenyl (IPP) to its highly electrophilic allylic isomer, dimethylallyl diphosphate (DMAPP). Finally the farnesyl diphosphate synthase fps1 catalyzes the sequential condensation of isopentenyl pyrophosphate with dimethylallyl pyrophosphate, and then with the resultant geranylpyrophosphate to the ultimate product farnesyl pyrophosphate. This is Diphosphomevalonate decarboxylase (mvd1) from Schizosaccharomyces pombe (strain 972 / ATCC 24843) (Fission yeast).